The chain runs to 273 residues: Dermonecrotic toxin LsaSicTox-alphaIB1avi (273 aa).

His-5 is an active-site residue. Mg(2+) is bound by residues Glu-25 and Asp-27. His-41 functions as the Nucleophile in the catalytic mechanism. 2 disulfide bridges follow: Cys-45–Cys-51 and Cys-47–Cys-190. A Mg(2+)-binding site is contributed by Asp-85.

This sequence belongs to the arthropod phospholipase D family. Class II subfamily. Mg(2+) serves as cofactor. Expressed by the venom gland.

Its subcellular location is the secreted. It catalyses the reaction an N-(acyl)-sphingosylphosphocholine = an N-(acyl)-sphingosyl-1,3-cyclic phosphate + choline. The catalysed reaction is an N-(acyl)-sphingosylphosphoethanolamine = an N-(acyl)-sphingosyl-1,3-cyclic phosphate + ethanolamine. It carries out the reaction a 1-acyl-sn-glycero-3-phosphocholine = a 1-acyl-sn-glycero-2,3-cyclic phosphate + choline. The enzyme catalyses a 1-acyl-sn-glycero-3-phosphoethanolamine = a 1-acyl-sn-glycero-2,3-cyclic phosphate + ethanolamine. Dermonecrotic toxins cleave the phosphodiester linkage between the phosphate and headgroup of certain phospholipids (sphingolipid and lysolipid substrates), forming an alcohol (often choline) and a cyclic phosphate. This toxin acts on sphingomyelin (SM). It may also act on ceramide phosphoethanolamine (CPE), lysophosphatidylcholine (LPC) and lysophosphatidylethanolamine (LPE), but not on lysophosphatidylserine (LPS), and lysophosphatidylglycerol (LPG). It acts by transphosphatidylation, releasing exclusively cyclic phosphate products as second products. Induces dermonecrosis, hemolysis, increased vascular permeability, edema, inflammatory response, and platelet aggregation. This chain is Dermonecrotic toxin LsaSicTox-alphaIB1avi, found in Loxosceles sabina (Tucson recluse spider).